Consider the following 182-residue polypeptide: MEQGKHLAGLILAITLLQGTMAQLKEGKHSVLLDDNREDGSVLLTCGLPDQNIRWFKDGKEICSLNNSRSTCNLGSSSKDPRGIYWCEGSKENSKRLQVYYRMCQNCIELNSATVSGFIFTEIISLFFLAVGVYFIAGQDGVRQSRASDKQTLLSNDQLYQPLKDREDDQYSHLQGNNSRKN.

The first 22 residues, 1-22 (MEQGKHLAGLILAITLLQGTMA), serve as a signal peptide directing secretion. Residues 23–98 (QLKEGKHSVL…GSKENSKRLQ (76 aa)) form the Ig-like domain. Residues 23–116 (QLKEGKHSVL…CIELNSATVS (94 aa)) lie on the Extracellular side of the membrane. Cys-46 and Cys-87 are joined by a disulfide. Asn-66 carries an N-linked (GlcNAc...) asparagine glycan. The chain crosses the membrane as a helical span at residues 117–137 (GFIFTEIISLFFLAVGVYFIA). Over 138–182 (GQDGVRQSRASDKQTLLSNDQLYQPLKDREDDQYSHLQGNNSRKN) the chain is Cytoplasmic. Residue Ser-145 is modified to Phosphoserine. Residue Ser-148 is modified to Phosphoserine; by PKC. The ITAM domain maps to 149 to 177 (DKQTLLSNDQLYQPLKDREDDQYSHLQGN). The short motif at 153 to 154 (LL) is the Di-leucine motif element.

The TCR-CD3 complex is composed of a CD3D/CD3E and a CD3G/CD3E heterodimers that preferentially associate with TCRalpha and TCRbeta, respectively, to form TCRalpha/CD3E/CD3G and TCRbeta/CD3G/CD3E trimers. In turn, the hexamer interacts with CD3Z homodimer to form the TCR-CD3 complex. Alternatively, TCRalpha and TCRbeta can be replaced by TCRgamma and TCRdelta. In terms of processing, phosphorylated on Tyr residues after T-cell receptor triggering by LCK in association with CD4/CD8. Phosphorylated also by PKC; leading to the TCR complex down-regulation. Post-translationally, phosphorylated on Tyr residues after T-cell receptor triggering by LCK in association with CD4/CD8.

Its subcellular location is the cell membrane. Its function is as follows. Part of the TCR-CD3 complex present on T-lymphocyte cell surface that plays an essential role in adaptive immune response. When antigen presenting cells (APCs) activate T-cell receptor (TCR), TCR-mediated signals are transmitted across the cell membrane by the CD3 chains CD3D, CD3E, CD3G and CD3Z. All CD3 chains contain immunoreceptor tyrosine-based activation motifs (ITAMs) in their cytoplasmic domain. Upon TCR engagement, these motifs become phosphorylated by Src family protein tyrosine kinases LCK and FYN, resulting in the activation of downstream signaling pathways. In addition to this role of signal transduction in T-cell activation, CD3G plays an essential role in the dynamic regulation of TCR expression at the cell surface. Indeed, constitutive TCR cycling is dependent on the di-leucine-based (diL) receptor-sorting motif present in CD3G. In Sus scrofa (Pig), this protein is T-cell surface glycoprotein CD3 gamma chain (CD3G).